The chain runs to 438 residues: Glutamate-1-semialdehyde 2,1-aminomutase (438 aa).

The residue at position 274 (Lys-274) is an N6-(pyridoxal phosphate)lysine.

Belongs to the class-III pyridoxal-phosphate-dependent aminotransferase family. HemL subfamily. Homodimer. Requires pyridoxal 5'-phosphate as cofactor.

Its subcellular location is the cytoplasm. The enzyme catalyses (S)-4-amino-5-oxopentanoate = 5-aminolevulinate. The protein operates within porphyrin-containing compound metabolism; protoporphyrin-IX biosynthesis; 5-aminolevulinate from L-glutamyl-tRNA(Glu): step 2/2. The sequence is that of Glutamate-1-semialdehyde 2,1-aminomutase from Salinibacter ruber (strain DSM 13855 / M31).